Consider the following 465-residue polypeptide: Sensor histidine kinase ZraS (465 aa).

Topologically, residues Met-1 to Trp-14 are cytoplasmic. The chain crosses the membrane as a helical span at residues Leu-15 to Ile-35. The Periplasmic portion of the chain corresponds to Arg-36 to Thr-201. Residues Leu-202–Tyr-222 traverse the membrane as a helical segment. Topologically, residues Arg-223–Gly-465 are cytoplasmic. The region spanning Gly-251–Ile-458 is the Histidine kinase domain. Position 254 is a phosphohistidine; by autocatalysis (His-254).

Post-translationally, autophosphorylated.

It is found in the cell inner membrane. The catalysed reaction is ATP + protein L-histidine = ADP + protein N-phospho-L-histidine.. Its activity is regulated as follows. Activity of the ZraS/ZraR two-component system is repressed by the zinc-bound form of ZraP, which probably interacts with the periplasmic region of ZraS. Its function is as follows. Part of the Zra signaling pathway, an envelope stress response (ESR) system composed of the periplasmic accessory protein ZraP, the histidine kinase ZraS and the transcriptional regulator ZraR. The ZraPSR system contributes to antibiotic resistance and is important for membrane integrity in the presence of membrane-targeting biocides. ZraS is a member of the two-component regulatory system ZraS/ZraR. Functions as a membrane-associated sensor kinase that phosphorylates ZraR in response to high concentrations of Zn(2+) or Pb(2+) in the medium. Binds one zinc molecule with high affinity via its periplasmic domain, inducing a conformational change that is transmitted to the histidine kinase domain and leads to the activation of ZraR. The system has no direct role in zinc or copper resistance. The sequence is that of Sensor histidine kinase ZraS from Escherichia coli (strain K12).